Consider the following 1256-residue polypeptide: Putative protein DDB_G0292252 (1256 aa).

Disordered stretches follow at residues Met-1–Asn-53, Leu-145–Arg-243, Glu-898–Thr-951, and Ser-1069–Ser-1136. The span at Asn-147 to Gly-214 shows a compositional bias: low complexity. A compositionally biased stretch (polar residues) spans Gln-222–Arg-243. Composition is skewed to low complexity over residues Glu-898–Glu-916 and Thr-925–Thr-942. The segment covering Ser-1069–Pro-1079 has biased composition (polar residues). The span at Ser-1080–Ser-1136 shows a compositional bias: low complexity.

In Dictyostelium discoideum (Social amoeba), this protein is Putative protein DDB_G0292252.